Consider the following 328-residue polypeptide: DNA-directed RNA polymerase subunit alpha (328 aa).

Residues 1-230 (MSNHGLQMPE…DHVSFFIQLE (230 aa)) are alpha N-terminal domain (alpha-NTD). The segment at 248 to 328 (RIRELLAQPV…EEYLEEKKAS (81 aa)) is alpha C-terminal domain (alpha-CTD).

Belongs to the RNA polymerase alpha chain family. As to quaternary structure, homodimer. The RNAP catalytic core consists of 2 alpha, 1 beta, 1 beta' and 1 omega subunit. When a sigma factor is associated with the core the holoenzyme is formed, which can initiate transcription.

The enzyme catalyses RNA(n) + a ribonucleoside 5'-triphosphate = RNA(n+1) + diphosphate. Its function is as follows. DNA-dependent RNA polymerase catalyzes the transcription of DNA into RNA using the four ribonucleoside triphosphates as substrates. The protein is DNA-directed RNA polymerase subunit alpha of Salinibacter ruber (strain DSM 13855 / M31).